A 546-amino-acid polypeptide reads, in one-letter code: Arginine--tRNA ligase (546 aa).

A 'HIGH' region motif is present at residues 122 to 132 (ANPTGPFTVGH).

This sequence belongs to the class-I aminoacyl-tRNA synthetase family. As to quaternary structure, monomer.

It is found in the cytoplasm. It carries out the reaction tRNA(Arg) + L-arginine + ATP = L-arginyl-tRNA(Arg) + AMP + diphosphate. The polypeptide is Arginine--tRNA ligase (argS) (Thermotoga maritima (strain ATCC 43589 / DSM 3109 / JCM 10099 / NBRC 100826 / MSB8)).